The primary structure comprises 247 residues: 5'-nucleotidase SurE (247 aa).

Positions 8, 9, 39, and 91 each coordinate a divalent metal cation.

The protein belongs to the SurE nucleotidase family. The cofactor is a divalent metal cation.

The protein resides in the cytoplasm. The catalysed reaction is a ribonucleoside 5'-phosphate + H2O = a ribonucleoside + phosphate. Functionally, nucleotidase that shows phosphatase activity on nucleoside 5'-monophosphates. This Aromatoleum aromaticum (strain DSM 19018 / LMG 30748 / EbN1) (Azoarcus sp. (strain EbN1)) protein is 5'-nucleotidase SurE.